The following is a 426-amino-acid chain: Transcriptional enhancer factor TEF-1 (426 aa).

An N-acetylmethionine modification is found at Met1. Polar residues predominate over residues 1 to 12; the sequence is MEPSSWSGSESP. Residues 1–31 are disordered; that stretch reads MEPSSWSGSESPAENMERMSDSADKPIDNDA. Ser11 is modified (phosphoserine). Basic and acidic residues predominate over residues 15-28; the sequence is NMERMSDSADKPID. The TEA DNA-binding region spans 28–104; that stretch reads DNDAEGVWSP…QVLARRKSRD (77 aa). Position 108 is an N6-lactoyllysine (Lys108). The tract at residues 167–426 is transcriptional activation; it reads GSSQDVKPFV…QHHIYRLVKD (260 aa).

In terms of assembly, interacts with YAP1 and WWTR1/TAZ. Post-translationally, lactylation by AARS1 promotes nuclear localization and stabilization of YAP1, leading to increased Hippo signaling pathway. Delactylated by SIRT1. In developing skeletal muscle and myocardium, in mitotic neuroblasts both in the brain and spinal cord. At later stages of embryogenesis expressed in several developing structures such as the olfactory system, the intestine, and the kidney.

Its subcellular location is the nucleus. Transcription factor which plays a key role in the Hippo signaling pathway, a pathway involved in organ size control and tumor suppression by restricting proliferation and promoting apoptosis. The core of this pathway is composed of a kinase cascade wherein MST1/MST2, in complex with its regulatory protein SAV1, phosphorylates and activates LATS1/2 in complex with its regulatory protein MOB1, which in turn phosphorylates and inactivates YAP1 oncoprotein and WWTR1/TAZ. Acts by mediating gene expression of YAP1 and WWTR1/TAZ, thereby regulating cell proliferation, migration and epithelial mesenchymal transition (EMT) induction. Binds specifically and cooperatively to the SPH and GT-IIC 'enhansons' (5'-GTGGAATGT-3') and activates transcription in vivo in a cell-specific manner. The activation function appears to be mediated by a limiting cell-specific transcriptional intermediary factor (TIF). Involved in cardiac development. Binds to the M-CAT motif. This chain is Transcriptional enhancer factor TEF-1 (Tead1), found in Mus musculus (Mouse).